The following is a 180-amino-acid chain: MAAVNGYQGNTPADPPASNGSKQPAAPTKTVDSQSVLKRLQSELMGLMMGGGPGISAFPEEDNIFCWKGTITGSKDTVFEGTEYRLSLSFSNDYPFKPPKVKFETCCFHPNVDVYGNICLDILQDKWSSAYDVRTILLSIQSLLGEPNISSPLNTQAAQLWSNQEEYRKMVEKLYKPPSA.

Residues 1 to 33 form a disordered region; sequence MAAVNGYQGNTPADPPASNGSKQPAAPTKTVDS. The region spanning 35-180 is the UBC core domain; the sequence is SVLKRLQSEL…VEKLYKPPSA (146 aa). Cysteine 119 acts as the Glycyl thioester intermediate in catalysis.

The protein belongs to the ubiquitin-conjugating enzyme family. Expressed in all tissues with cell division activities and in mature leaves.

It carries out the reaction S-ubiquitinyl-[E1 ubiquitin-activating enzyme]-L-cysteine + [E2 ubiquitin-conjugating enzyme]-L-cysteine = [E1 ubiquitin-activating enzyme]-L-cysteine + S-ubiquitinyl-[E2 ubiquitin-conjugating enzyme]-L-cysteine.. The protein operates within protein modification; protein ubiquitination. Functionally, accepts the ubiquitin from the E1 complex and catalyzes its covalent attachment to other proteins. This Arabidopsis thaliana (Mouse-ear cress) protein is Ubiquitin-conjugating enzyme E2 20 (UBC20).